The sequence spans 184 residues: MSRIANKPIVIPNGVEVKVEGNVLKVKGPLGELKQDFLPYVKVEINGNEMNVKPNVDYMKRRSDLKKMKMFTGTYWRLFNNMVIGVTKGFKKELEIVGIGYRAQLQGKKLVMNLGYAHPVEMEIPSDVKVEVPSPNKIIVSGIDKQRVGQVAADIRKWREPNVYSGKGIRYVGEVVRLKEGKKA.

This sequence belongs to the universal ribosomal protein uL6 family. In terms of assembly, part of the 50S ribosomal subunit.

Its function is as follows. This protein binds to the 23S rRNA, and is important in its secondary structure. It is located near the subunit interface in the base of the L7/L12 stalk, and near the tRNA binding site of the peptidyltransferase center. The sequence is that of Large ribosomal subunit protein uL6 from Thermosipho africanus (strain TCF52B).